Reading from the N-terminus, the 145-residue chain is D-aminoacyl-tRNA deacylase (145 aa).

A Gly-cisPro motif, important for rejection of L-amino acids motif is present at residues 137–138 (GP).

The protein belongs to the DTD family. As to quaternary structure, homodimer.

Its subcellular location is the cytoplasm. It catalyses the reaction glycyl-tRNA(Ala) + H2O = tRNA(Ala) + glycine + H(+). The catalysed reaction is a D-aminoacyl-tRNA + H2O = a tRNA + a D-alpha-amino acid + H(+). An aminoacyl-tRNA editing enzyme that deacylates mischarged D-aminoacyl-tRNAs. Also deacylates mischarged glycyl-tRNA(Ala), protecting cells against glycine mischarging by AlaRS. Acts via tRNA-based rather than protein-based catalysis; rejects L-amino acids rather than detecting D-amino acids in the active site. By recycling D-aminoacyl-tRNA to D-amino acids and free tRNA molecules, this enzyme counteracts the toxicity associated with the formation of D-aminoacyl-tRNA entities in vivo and helps enforce protein L-homochirality. This is D-aminoacyl-tRNA deacylase from Alcanivorax borkumensis (strain ATCC 700651 / DSM 11573 / NCIMB 13689 / SK2).